We begin with the raw amino-acid sequence, 636 residues long: PTS system beta-glucoside-specific EIIBCA component (636 aa).

The region spanning 1-86 (MKYEQLAKDI…VEIGGFQNQA (86 aa)) is the PTS EIIB type-1 domain. The active-site Phosphocysteine intermediate; for EIIB activity is the C26. Helical transmembrane passes span 104-124 (IDII…TGMI), 146-166 (LLHA…GYTA), 172-192 (ATPF…LVVL), 215-235 (FLGI…IILA), 258-278 (LVPF…IGPI), 299-319 (IIAG…GLHW), 337-357 (VLAM…AVWL), 369-389 (VPAF…GVTL), 407-427 (AIIG…IFGI), and 444-464 (IVIA…LFGL). The PTS EIIC type-1 domain occupies 105–476 (DIIASIFTPV…GNASDEQTET (372 aa)). The segment at 472-492 (EQTETKAHTSTGTGEKEEISS) is disordered. A PTS EIIA type-1 domain is found at 506–610 (DEAFSSGALG…AVTTPVIVTN (105 aa)). H558 functions as the Tele-phosphohistidine intermediate; for EIIA activity in the catalytic mechanism.

It localises to the cell membrane. In terms of biological role, the phosphoenolpyruvate-dependent sugar phosphotransferase system (sugar PTS), a major carbohydrate active -transport system, catalyzes the phosphorylation of incoming sugar substrates concomitantly with their translocation across the cell membrane. This system is involved in beta-glucoside transport. This is PTS system beta-glucoside-specific EIIBCA component (bglP) from Halalkalibacterium halodurans (strain ATCC BAA-125 / DSM 18197 / FERM 7344 / JCM 9153 / C-125) (Bacillus halodurans).